We begin with the raw amino-acid sequence, 153 residues long: Endoribonuclease YbeY (153 aa).

The Zn(2+) site is built by histidine 114, histidine 118, and histidine 124.

It belongs to the endoribonuclease YbeY family. The cofactor is Zn(2+).

The protein resides in the cytoplasm. Single strand-specific metallo-endoribonuclease involved in late-stage 70S ribosome quality control and in maturation of the 3' terminus of the 16S rRNA. The chain is Endoribonuclease YbeY from Finegoldia magna (strain ATCC 29328 / DSM 20472 / WAL 2508) (Peptostreptococcus magnus).